The sequence spans 100 residues: Enhancer of yellow 2 transcription factor (100 aa).

The protein belongs to the ENY2 family. In terms of assembly, component of the nuclear pore complex (NPC)-associated AMEX complex (anchoring and mRNA export complex), composed of at least e(y)2 and xmas-2. Component of the SAGA transcription coactivator-HAT complexes, at least composed of Ada2b, e(y)2, Pcaf/Gcn5, Taf10 and Nipped-A/Trrap. Within the SAGA complex, e(y)2, Sgf11, and not/nonstop form an additional subcomplex of SAGA called the DUB module (deubiquitination module). Component of the THO complex, composed of at least e(y)2, HPR1, THO2, THOC5, THOC6 and THOC7. Interacts with e(y)1. Interacts with su(Hw) (via zinc fingers). Interacts with xmas-2; required for localization to the nuclear periphery. Interacts with the nuclear pore complex (NPC).

It localises to the nucleus. The protein resides in the nucleoplasm. It is found in the cytoplasm. Involved in mRNA export coupled transcription activation by association with both the AMEX and the SAGA complexes. The SAGA complex is a multiprotein complex that activates transcription by remodeling chromatin and mediating histone acetylation and deubiquitination. Within the SAGA complex, participates in a subcomplex that specifically deubiquitinates histone H2B. The SAGA complex is recruited to specific gene promoters by activators, where it is required for transcription. Required for nuclear receptor-mediated transactivation. Involved in transcription elongation by recruiting the THO complex onto nascent mRNA. The AMEX complex functions in docking export-competent ribonucleoprotein particles (mRNPs) to the nuclear entrance of the nuclear pore complex (nuclear basket). AMEX participates in mRNA export and accurate chromatin positioning in the nucleus by tethering genes to the nuclear periphery. This chain is Enhancer of yellow 2 transcription factor, found in Drosophila persimilis (Fruit fly).